A 273-amino-acid polypeptide reads, in one-letter code: 4-hydroxy-tetrahydrodipicolinate reductase (273 aa).

Residues G12–M17 and E38 each bind NAD(+). R39 is a binding site for NADP(+). Residues G102–T104 and A126–F129 contribute to the NAD(+) site. The active-site Proton donor/acceptor is H159. H160 lines the (S)-2,3,4,5-tetrahydrodipicolinate pocket. The Proton donor role is filled by K163. G169 to T170 provides a ligand contact to (S)-2,3,4,5-tetrahydrodipicolinate.

It belongs to the DapB family. As to quaternary structure, homotetramer.

It localises to the cytoplasm. The enzyme catalyses (S)-2,3,4,5-tetrahydrodipicolinate + NAD(+) + H2O = (2S,4S)-4-hydroxy-2,3,4,5-tetrahydrodipicolinate + NADH + H(+). The catalysed reaction is (S)-2,3,4,5-tetrahydrodipicolinate + NADP(+) + H2O = (2S,4S)-4-hydroxy-2,3,4,5-tetrahydrodipicolinate + NADPH + H(+). Its pathway is amino-acid biosynthesis; L-lysine biosynthesis via DAP pathway; (S)-tetrahydrodipicolinate from L-aspartate: step 4/4. Its function is as follows. Catalyzes the conversion of 4-hydroxy-tetrahydrodipicolinate (HTPA) to tetrahydrodipicolinate. The sequence is that of 4-hydroxy-tetrahydrodipicolinate reductase from Yersinia enterocolitica serotype O:8 / biotype 1B (strain NCTC 13174 / 8081).